The chain runs to 402 residues: Phosphoglycerate kinase (402 aa).

Residues Asp21–Asn23, Arg36, His59–Arg62, Arg118, and Arg151 each bind substrate. Residues Lys201, Gly293, Glu324, and Gly353 to Ser356 contribute to the ATP site.

This sequence belongs to the phosphoglycerate kinase family. As to quaternary structure, monomer.

It localises to the cytoplasm. The catalysed reaction is (2R)-3-phosphoglycerate + ATP = (2R)-3-phospho-glyceroyl phosphate + ADP. The protein operates within carbohydrate degradation; glycolysis; pyruvate from D-glyceraldehyde 3-phosphate: step 2/5. This is Phosphoglycerate kinase from Thermosipho africanus (strain TCF52B).